A 147-amino-acid polypeptide reads, in one-letter code: Large ribosomal subunit protein uL15 (147 aa).

The interval 1–46 is disordered; it reads MSIRLENLSYTPGARKEKHRKGRGHAAGKGKQAGRGQSGQKKRSTV. Over residues 16–28 the composition is skewed to basic residues; the sequence is KEKHRKGRGHAAG.

Belongs to the universal ribosomal protein uL15 family. Part of the 50S ribosomal subunit.

Binds to the 23S rRNA. The protein is Large ribosomal subunit protein uL15 of Mesomycoplasma hyopneumoniae (strain 7448) (Mycoplasma hyopneumoniae).